The chain runs to 200 residues: Small ribosomal subunit protein uS4c (200 aa).

The S4 RNA-binding domain maps to 91 to 154; that stretch reads MRLDNVVFRL…NSRKMVTEAN (64 aa).

This sequence belongs to the universal ribosomal protein uS4 family. In terms of assembly, part of the 30S ribosomal subunit. Contacts protein S5. The interaction surface between S4 and S5 is involved in control of translational fidelity.

It localises to the plastid. The protein resides in the chloroplast. Functionally, one of the primary rRNA binding proteins, it binds directly to 16S rRNA where it nucleates assembly of the body of the 30S subunit. Its function is as follows. With S5 and S12 plays an important role in translational accuracy. The chain is Small ribosomal subunit protein uS4c (rps4) from Oltmannsiellopsis viridis (Marine flagellate).